The sequence spans 219 residues: LHFPL tetraspan subfamily member 5 protein (219 aa).

At 1–24 (MVKLLPAQEAAKIYHTNYVRNSRA) the chain is on the cytoplasmic side. The helical transmembrane segment at 25–45 (VGVMWGTLTICFSVLVMALFI) threads the bilayer. Residues 46–98 (QPYWIGDSVSTPQAGYFGLFSYCVGNVLSSELICKGGPLDFSSIPSRAFKTAM) are Extracellular-facing. A helical transmembrane segment spans residues 99-119 (FFVALAMFLIIGSIICFSLFF). The Cytoplasmic segment spans residues 120-128 (VCNTATVYK). A helical membrane pass occupies residues 129-149 (ICAWMQLAAATGLMIGCLVYP). Topologically, residues 150-178 (DGWDSSEVRRMCGEQTGKYTLGHCTIRWA) are extracellular. A helical membrane pass occupies residues 179–199 (FMLAILSIGDALILSFLAFVL). Over 200–219 (GYRQDKLLPDDYKADGNEEV) the chain is Cytoplasmic.

Belongs to the LHFP family. In terms of assembly, forms the MET channel composed of TMC (TMC1 or TMC2), TMIE, TOMT, CIB (CIB2 or CIB3), LHPL5 and PCDH15. Interaction with PCDH15 is required for efficient localization to hair bundles.

It is found in the cell membrane. Auxiliary subunit of the mechanotransducer (MET) non-specific cation channel complex located at the tips of the shorter stereocilia of cochlear hair cells and that mediates sensory transduction in the auditory system. The MET complex is composed of two dimeric pore-forming ion-conducting transmembrane TMC (TMC1 or TMC2) subunits, and aided by several auxiliary proteins including LHFPL5, TMIE, CIB2/3 and TOMT, and the tip-link PCDH15. Functionally couples PCDH15 to the transduction channel. The polypeptide is LHFPL tetraspan subfamily member 5 protein (Rattus norvegicus (Rat)).